The following is a 572-amino-acid chain: Phosphoglucomutase-1 (572 aa).

Residues threonine 23, arginine 27, 126-127 (SH), and lysine 140 contribute to the substrate site. Serine 126 serves as the catalytic Phosphoserine intermediate. Serine 126 contacts Mg(2+). Aspartate 308, aspartate 310, and aspartate 312 together coordinate Mg(2+). Residues 312–313 (DR), threonine 373, 392–394 (EES), lysine 405, and arginine 527 each bind substrate.

It belongs to the phosphohexose mutase family. The cofactor is Mg(2+). Phosphorylated via a calcium-dependent protein kinase. Very rapidly (within 80 ms) dephosphorylated during triggered trichocyst exocytosis. In terms of processing, O-glycosylated with a short chain of mannose residues.

It is found in the cytoplasm. It carries out the reaction alpha-D-glucose 1-phosphate = alpha-D-glucose 6-phosphate. In terms of biological role, may be involved in membrane fusion in exocytosis. This is Phosphoglucomutase-1 (pp63-1) from Paramecium tetraurelia.